The chain runs to 396 residues: NADH-quinone oxidoreductase subunit D (396 aa).

Belongs to the complex I 49 kDa subunit family. NDH-1 is composed of 14 different subunits. Subunits NuoB, C, D, E, F, and G constitute the peripheral sector of the complex.

The protein resides in the cell inner membrane. It carries out the reaction a quinone + NADH + 5 H(+)(in) = a quinol + NAD(+) + 4 H(+)(out). Functionally, NDH-1 shuttles electrons from NADH, via FMN and iron-sulfur (Fe-S) centers, to quinones in the respiratory chain. The immediate electron acceptor for the enzyme in this species is believed to be ubiquinone. Couples the redox reaction to proton translocation (for every two electrons transferred, four hydrogen ions are translocated across the cytoplasmic membrane), and thus conserves the redox energy in a proton gradient. The protein is NADH-quinone oxidoreductase subunit D of Bartonella quintana (strain Toulouse) (Rochalimaea quintana).